A 269-amino-acid chain; its full sequence is Putative ankyrin repeat protein L23 (269 aa).

ANK repeat units lie at residues 118 to 147 (EDDYAVKWASKNGHLKVVEYLVSLGADIKS), 148 to 177 (DGDYAVRWASENGHIDVVKYLVSQNADIRA), 179 to 207 (NDYAVKWASSNGHLEVVKYLVSQGANIRE), 208 to 237 (QNDYAIRLASQYGHLEVVKYLISLGADIRA), and 238 to 267 (DNDCAVRLASENGHIEIVNYLISQGADIRA).

The sequence is that of Putative ankyrin repeat protein L23 from Acanthamoeba polyphaga (Amoeba).